The chain runs to 320 residues: Nucleoporin Nup37 (320 aa).

WD repeat units lie at residues 67-113 (KEQR…FTSL), 118-157 (GHGDYVNDVSWVCDGELLASVSDDFTCRFWTTTGGGENVI), 160-200 (GLSS…TVIS), and 203-242 (SPKFPLMSADWAHSNRLFITSLAGGDVVTWDLNRPYVPAD).

Its subcellular location is the nucleus. The protein resides in the nuclear pore complex. Its function is as follows. As part of the nuclear pore complex (NPC), has a role in its assembly and function. (Microbial infection) Required for optimal replication of E.chaffeensis. This is Nucleoporin Nup37 from Drosophila melanogaster (Fruit fly).